Consider the following 216-residue polypeptide: CDP-diacylglycerol--glycerol-3-phosphate 3-phosphatidyltransferase (216 aa).

Transmembrane regions (helical) follow at residues 40–60, 88–108, 141–161, and 176–196; these read VVSI…FLDG, VMLC…CILY, MGAV…LAGA, and VVPV…FFPI.

It belongs to the CDP-alcohol phosphatidyltransferase class-I family.

Its subcellular location is the cell membrane. It carries out the reaction a CDP-1,2-diacyl-sn-glycerol + sn-glycerol 3-phosphate = a 1,2-diacyl-sn-glycero-3-phospho-(1'-sn-glycero-3'-phosphate) + CMP + H(+). It functions in the pathway phospholipid metabolism; phosphatidylglycerol biosynthesis; phosphatidylglycerol from CDP-diacylglycerol: step 1/2. This protein catalyzes the committed step to the synthesis of the acidic phospholipids. In Treponema pallidum (strain Nichols), this protein is CDP-diacylglycerol--glycerol-3-phosphate 3-phosphatidyltransferase (pgsA).